Reading from the N-terminus, the 346-residue chain is Protein phosphatase 1 regulatory subunit 7 (346 aa).

Positions 1–13 (MADEEGETEVQEM) are enriched in acidic residues. A disordered region spans residues 1-46 (MADEEGETEVQEMEVDRRESDESADDEAKEKPDRVDGGVKNGEVPL). The segment covering 14 to 37 (EVDRRESDESADDEAKEKPDRVDG) has biased composition (basic and acidic residues). 11 LRR repeats span residues 63 to 84 (EAED…EVLK), 85 to 106 (KVKT…EQLV), 107 to 128 (TLTE…ETLR), 129 to 150 (DLQI…ESLS), 151 to 172 (HLQR…GTLT), 173 to 194 (QLRL…DSLR), 195 to 216 (ELDS…ETLT), 217 to 238 (NLTV…QNLV), 239 to 260 (NLRE…ENNN), 261 to 282 (KLTT…KHLS), and 283 to 304 (ELQE…EELS). The LRRCT domain maps to 317–346 (NPLQKDAQYRRKIMLALPSVRQIDATFVRF).

The protein belongs to the SDS22 family.

It is found in the nucleus. Regulatory subunit of protein phosphatase 1. The polypeptide is Protein phosphatase 1 regulatory subunit 7 (ppp1r7) (Xenopus tropicalis (Western clawed frog)).